Here is a 103-residue protein sequence, read N- to C-terminus: Putative membrane protein insertion efficiency factor (103 aa).

Belongs to the UPF0161 family.

The protein resides in the cell membrane. Its function is as follows. Could be involved in insertion of integral membrane proteins into the membrane. The protein is Putative membrane protein insertion efficiency factor of Clavibacter sepedonicus (Clavibacter michiganensis subsp. sepedonicus).